Consider the following 487-residue polypeptide: b(0,+)-type amino acid transporter 1 (487 aa).

Residues 1-20 (MEETSPRRRREDEKSVHSTE) are compositionally biased toward basic and acidic residues. The tract at residues 1-23 (MEETSPRRRREDEKSVHSTEPKT) is disordered. The Cytoplasmic segment spans residues 1–31 (MEETSPRRRREDEKSVHSTEPKTTSLQKEVG). Ser-18 is modified (phosphoserine). A helical transmembrane segment spans residues 32–55 (LLSGICIIVGTIIGSGIFISPKSV). 43 to 47 (IIGSG) is an L-arginine binding site. At 56-62 (LANTESV) the chain is on the extracellular side. A helical transmembrane segment spans residues 63–84 (GPCLIIWAACGVLATLGALCFA). The Cytoplasmic portion of the chain corresponds to 85–110 (ELGTMITKSGGEYPYLMEAFGPIPAY). A helical transmembrane segment spans residues 111-137 (LFSWTSLIVMKPSSFAIICLSFSEYVC). Residues 138–147 (AAFYLGCRPP) are Extracellular-facing. Helical transmembrane passes span 148–169 (AVVVKLLAAAAILLITTVNALS) and 170–193 (VRLGSYVQNVFTAAKLVIVAIIII). Residues 194-217 (SGLVLLAQGNVKNFQNSFEGSQTS) lie on the Extracellular side of the membrane. A helical membrane pass occupies residues 218–238 (VGSISLAFYNGLWAYDGWNQL). Asp-233 is a binding site for L-arginine. Residues 239-251 (NYITEELRNPYRN) lie on the Cytoplasmic side of the membrane. A helical transmembrane segment spans residues 252–274 (LPMAIVIGIPLVTVCYILMNIAY). Residues 275–302 (FTVMTPTELLQSQAVAVTFGDRVLYPAS) are Extracellular-facing. A helical membrane pass occupies residues 303–325 (WVVPLFVAFSTIGAANGTCFTAG). The Cytoplasmic portion of the chain corresponds to 326–351 (RLIYVAGREGHMLKVLSYISVKRLTP). 2 consecutive transmembrane segments (helical) span residues 352-370 (APALVFYGIIAIIYIIPGD) and 371-391 (INSLVNYFSFAAWLFYGMTIL). Residues 392 to 410 (GLVVMRFTRKDLERPIKVP) lie on the Cytoplasmic side of the membrane. Residues 411 to 431 (IFIPIIVILVSVFLILAPIIS) traverse the membrane as a helical segment. The Extracellular segment spans residues 432–434 (SPA). Residues 435-450 (WEYLYCVLFILSGLIF) form a helical membrane-spanning segment. Topologically, residues 451–487 (YFLFVHYKFRWAQKISRPITKHLQMLMEVVPPEKDPE) are cytoplasmic.

This sequence belongs to the amino acid-polyamine-organocation (APC) superfamily. Disulfide-linked heterodimer composed of the catalytic light chain subunit SLC7A9 and the heavy chain subunit SLC3A1. The heterodimer is the minimal functional unit. Assembles in heterotetramers (dimers of heterodimers) and higher order oligomers; the oligomerization is mediated by SLC3A1 likely to prevent degradation and facilitate heteromer trafficking to the plasma membrane. Interacts with CAV1. In terms of tissue distribution, outer medulla of kidney (at protein level). Kidney and small intestine. In the kidney localized to the apical membrane of the proximal tubules.

It localises to the apical cell membrane. It catalyses the reaction L-leucine(out) + L-arginine(in) = L-leucine(in) + L-arginine(out). The catalysed reaction is L-histidine(out) + L-arginine(in) = L-histidine(in) + L-arginine(out). It carries out the reaction L-arginine(in) + L-phenylalanine(out) = L-arginine(out) + L-phenylalanine(in). The enzyme catalyses L-cysteine(out) + L-arginine(in) = L-cysteine(in) + L-arginine(out). It catalyses the reaction L-cystine(out) + L-arginine(in) = L-cystine(in) + L-arginine(out). The catalysed reaction is L-lysine(out) + L-arginine(in) = L-lysine(in) + L-arginine(out). Its function is as follows. Associates with SLC3A1 to form a functional transporter complex that mediates the electrogenic exchange between cationic amino acids and neutral amino acids, with a stoichiometry of 1:1. Has system b(0,+)-like activity with high affinity for extracellular cationic amino acids and L-cystine and lower affinity for intracellular neutral amino acids. Substrate exchange is driven by high concentration of intracellular neutral amino acids and the intracellular reduction of L-cystine to L-cysteine. Required for reabsorption of L-cystine and dibasic amino acids across the brush border membrane in renal proximal tubules. In Rattus norvegicus (Rat), this protein is b(0,+)-type amino acid transporter 1 (Slc7a9).